Here is a 645-residue protein sequence, read N- to C-terminus: Putative galactocerebrosidase (645 aa).

A signal peptide spans 1 to 16; sequence MFSIFIKIILILPSIA. Substrate is bound by residues Thr87 and Trp128. Residue Asn141 is glycosylated (N-linked (GlcNAc...) asparagine). Asn171 contributes to the substrate binding site. Glu172 (proton donor/acceptor) is an active-site residue. N-linked (GlcNAc...) asparagine glycosylation is found at Asn174 and Asn193. Glu248 functions as the Nucleophile in the catalytic mechanism. A disulfide bond links Cys261 and Cys365. Residues Asn274, Asn395, Asn411, Asn532, Asn616, Asn620, and Asn638 are each glycosylated (N-linked (GlcNAc...) asparagine).

This sequence belongs to the glycosyl hydrolase 59 family.

The catalysed reaction is a beta-D-Gal-(1&lt;-&gt;1')-ceramide + H2O = an N-acyl-sphingoid base + D-galactose. It carries out the reaction a beta-D-galactosyl-(1&lt;-&gt;1')-N-acylsphing-4-enine + H2O = an N-acylsphing-4-enine + D-galactose. Hydrolyzes the galactose ester bonds of galactosylceramide, galactosylsphingoid base, lactosylceramide, and monogalactosyldiglyceride. C.elegans contain specific sphingoid bases, which are unique or different in structure compared to the sphingoid bases found in other animals. Two examples of these distinctive compounds are: 15-methylhexadecasphinganine and 15-methylhexadecasphing-4-enine. This chain is Putative galactocerebrosidase, found in Caenorhabditis elegans.